The sequence spans 509 residues: Histidine--tRNA ligase, cytoplasmic (509 aa).

Position 2 is an N-acetylalanine (Ala2). The region spanning 3-59 (DRAALEDLVRVQGERVRGLKQQKASAEQIEEEVAKLLKLKAQLGPDEGKPKFVLKTP) is the WHEP-TRS domain. At Ser66 the chain carries Phosphoserine. Residues 130–132 (DLT), Arg157, Gln173, Asp177, Arg326, and 330–331 (YY) each bind L-histidine. Ser356 carries the post-translational modification Phosphoserine.

It belongs to the class-II aminoacyl-tRNA synthetase family. In terms of assembly, homodimer.

Its subcellular location is the cytoplasm. It catalyses the reaction tRNA(His) + L-histidine + ATP = L-histidyl-tRNA(His) + AMP + diphosphate + H(+). Catalyzes the ATP-dependent ligation of histidine to the 3'-end of its cognate tRNA, via the formation of an aminoacyl-adenylate intermediate (His-AMP). Plays a role in axon guidance. In Bos taurus (Bovine), this protein is Histidine--tRNA ligase, cytoplasmic (HARS1).